We begin with the raw amino-acid sequence, 318 residues long: Thymidylate synthase (318 aa).

DUMP contacts are provided by residues Arg25 and 180-181; that span reads RR. The Nucleophile role is filled by Cys200. DUMP contacts are provided by residues 220–223, Asn231, and 261–263; these read RSGD and HIY. Asp223 is a binding site for (6R)-5,10-methylene-5,6,7,8-tetrahydrofolate. Ala317 contacts (6R)-5,10-methylene-5,6,7,8-tetrahydrofolate.

It belongs to the thymidylate synthase family. Bacterial-type ThyA subfamily. Homodimer.

The protein localises to the cytoplasm. The enzyme catalyses dUMP + (6R)-5,10-methylene-5,6,7,8-tetrahydrofolate = 7,8-dihydrofolate + dTMP. The protein operates within pyrimidine metabolism; dTTP biosynthesis. In terms of biological role, catalyzes the reductive methylation of 2'-deoxyuridine-5'-monophosphate (dUMP) to 2'-deoxythymidine-5'-monophosphate (dTMP) while utilizing 5,10-methylenetetrahydrofolate (mTHF) as the methyl donor and reductant in the reaction, yielding dihydrofolate (DHF) as a by-product. This enzymatic reaction provides an intracellular de novo source of dTMP, an essential precursor for DNA biosynthesis. The protein is Thymidylate synthase of Lactobacillus gasseri (strain ATCC 33323 / DSM 20243 / BCRC 14619 / CIP 102991 / JCM 1131 / KCTC 3163 / NCIMB 11718 / NCTC 13722 / AM63).